We begin with the raw amino-acid sequence, 243 residues long: Carboxy-S-adenosyl-L-methionine synthase (243 aa).

Residues Y40, 65-67 (GCS), 90-91 (DN), 118-119 (DI), N133, and R200 each bind S-adenosyl-L-methionine.

The protein belongs to the class I-like SAM-binding methyltransferase superfamily. Cx-SAM synthase family. Homodimer.

The enzyme catalyses prephenate + S-adenosyl-L-methionine = carboxy-S-adenosyl-L-methionine + 3-phenylpyruvate + H2O. Catalyzes the conversion of S-adenosyl-L-methionine (SAM) to carboxy-S-adenosyl-L-methionine (Cx-SAM). In Shewanella sp. (strain MR-7), this protein is Carboxy-S-adenosyl-L-methionine synthase.